The primary structure comprises 208 residues: Small ribosomal subunit protein uS4A (208 aa).

The S4 RNA-binding domain occupies 98 to 161; sequence LRLDNVVFRM…RKVLRISEAL (64 aa).

This sequence belongs to the universal ribosomal protein uS4 family. In terms of assembly, part of the 30S ribosomal subunit. Contacts protein S5. The interaction surface between S4 and S5 is involved in control of translational fidelity.

Its function is as follows. One of the primary rRNA binding proteins, it binds directly to 16S rRNA where it nucleates assembly of the body of the 30S subunit. In terms of biological role, with S5 and S12 plays an important role in translational accuracy. The sequence is that of Small ribosomal subunit protein uS4A from Myxococcus xanthus (strain DK1622).